Reading from the N-terminus, the 224-residue chain is Casparian strip membrane protein 1 (224 aa).

Residues 1-22 form a disordered region; that stretch reads MSSGEPAAVSIPIHDHHGKAPA. Over 1 to 62 the chain is Cytoplasmic; sequence MSSGEPAAVS…RGDHHRGSRC (62 aa). A helical transmembrane segment spans residues 63-83; that stretch reads LAFLDFILRIAAFGPALAAAI. The Extracellular segment spans residues 84-110; sequence STGTSDETLSVFTEFYQFRARFDDFPA. A helical transmembrane segment spans residues 111 to 131; that stretch reads FLFFLVANAIVAGYLVLSLPF. The Cytoplasmic segment spans residues 132-145; it reads SAVLVIRPQTIGLR. Residues 146–166 traverse the membrane as a helical segment; the sequence is LLLLVCDMIMAAMLTAAASAA. Over 167–200 the chain is Extracellular; that stretch reads AAIVDLAHNGNLRANWVAICMQFHGFCQRTSGSV. A helical membrane pass occupies residues 201-221; sequence VASFLTVVILMFLVILAACSI. Residues 222 to 224 are Cytoplasmic-facing; it reads RKR.

The protein belongs to the Casparian strip membrane proteins (CASP) family. Homodimer and heterodimers.

It localises to the cell membrane. Functionally, regulates membrane-cell wall junctions and localized cell wall deposition. Required for establishment of the Casparian strip membrane domain (CSD) and the subsequent formation of Casparian strips, a cell wall modification of the root endodermis that determines an apoplastic barrier between the intraorganismal apoplasm and the extraorganismal apoplasm and prevents lateral diffusion. In Oryza sativa subsp. indica (Rice), this protein is Casparian strip membrane protein 1.